Consider the following 676-residue polypeptide: ATP-dependent zinc metalloprotease FtsH (676 aa).

Residues 1-12 are Cytoplasmic-facing; the sequence is MSFFDKIFKKFH. Residues 13-33 traverse the membrane as a helical segment; that stretch reads MGVLYFAVILIGATFIYCYFT. The Extracellular segment spans residues 34–115; sequence KHEKKDNNTF…DPRPWNGYEH (82 aa). The chain crosses the membrane as a helical span at residues 116–136; it reads VFWVFRQCLTMLFFYCFFLFF. Topologically, residues 137 to 676 are cytoplasmic; that stretch reads ADTIKQMGQE…EVLSTDSEQT (540 aa). 212–219 lines the ATP pocket; that stretch reads GPPGTGKT. His-433 is a Zn(2+) binding site. Glu-434 is a catalytic residue. His-437 and Asp-509 together coordinate Zn(2+). Residues 610-676 form a disordered region; sequence EKEETNAPTQ…EVLSTDSEQT (67 aa). Positions 615–636 are enriched in polar residues; the sequence is NAPTQTTSQMSSNNETTNTDKT. A compositionally biased stretch (low complexity) spans 650–667; it reads NQESNESNPNNNEKASPE.

The protein in the central section; belongs to the AAA ATPase family. In the C-terminal section; belongs to the peptidase M41 family. As to quaternary structure, homohexamer. It depends on Zn(2+) as a cofactor.

It is found in the cell membrane. In terms of biological role, acts as a processive, ATP-dependent zinc metallopeptidase for both cytoplasmic and membrane proteins. Plays a role in the quality control of integral membrane proteins. In Aster yellows witches'-broom phytoplasma (strain AYWB), this protein is ATP-dependent zinc metalloprotease FtsH.